Reading from the N-terminus, the 198-residue chain is GDP-mannose pyrophosphatase (198 aa).

GDP-alpha-D-mannose-binding positions include 38–40 (KRE), Arg67, and 85–87 (AGL). Residues 43 to 180 (DRGNGATVLL…EIRDGKAVIL (138 aa)) enclose the Nudix hydrolase domain. Residues Ala85, Glu100, and Glu104 each contribute to the Mg(2+) site. A Nudix box motif is present at residues 86 to 106 (GLLDNDEPEACIRKEAVEETG). GDP-alpha-D-mannose contacts are provided by residues Glu104, Glu127, 150 to 151 (DE), and Lys176. A Mg(2+)-binding site is contributed by Glu151.

This sequence belongs to the Nudix hydrolase family. NudK subfamily. Homodimer. Mg(2+) serves as cofactor.

It catalyses the reaction GDP-alpha-D-mannose + H2O = alpha-D-mannose 1-phosphate + GMP + 2 H(+). Its function is as follows. Nucleoside diphosphate sugar hydrolase that hydrolyzes GDP-mannose as its preferred substrate, yielding GMP and mannose-1-phosphate. In Klebsiella pneumoniae subsp. pneumoniae (strain ATCC 700721 / MGH 78578), this protein is GDP-mannose pyrophosphatase (nudK).